A 306-amino-acid chain; its full sequence is Glutaminase (306 aa).

Ser64, Asn115, Glu159, Asn166, Tyr190, Tyr242, and Val260 together coordinate substrate.

Belongs to the glutaminase family. As to quaternary structure, homotetramer.

It catalyses the reaction L-glutamine + H2O = L-glutamate + NH4(+). In Photobacterium profundum (strain SS9), this protein is Glutaminase.